A 211-amino-acid polypeptide reads, in one-letter code: Ras-related protein RABB1b (211 aa).

Residue 13-20 (GDTGVGKS) coordinates GTP. Residues 35 to 43 (HDLTIGVEF) carry the Effector region motif. GTP is bound by residues 61 to 65 (DTAGQ), 119 to 122 (NKCD), and 149 to 150 (SA). 2 S-geranylgeranyl cysteine lipidation sites follow: Cys209 and Cys210.

The protein belongs to the small GTPase superfamily. Rab family.

The protein localises to the cell membrane. Intracellular vesicle trafficking and protein transport. This Arabidopsis thaliana (Mouse-ear cress) protein is Ras-related protein RABB1b (RABB1B).